Reading from the N-terminus, the 353-residue chain is 2,4-diaminopentanoate dehydrogenase (353 aa).

The protein belongs to the DapB family. As to quaternary structure, homodimer.

The enzyme catalyses (2R,4S)-2,4-diaminopentanoate + NAD(+) + H2O = (2R)-2-amino-4-oxopentanoate + NH4(+) + NADH + H(+). The catalysed reaction is (2R,4S)-2,4-diaminopentanoate + NADP(+) + H2O = (2R)-2-amino-4-oxopentanoate + NH4(+) + NADPH + H(+). Its activity is regulated as follows. Inhibited by p-chloromercuribenzoate, iodoacetate and N-ethylmaleimide. In terms of biological role, involved in the ornithine fermentation pathway. Catalyzes the oxidative deamination of (2R,4S)-2,4-diaminopentanoate (DAP) to yield 2-amino-4-ketopentanoate (AKP). This Acetoanaerobium sticklandii (strain ATCC 12662 / DSM 519 / JCM 1433 / CCUG 9281 / NCIMB 10654 / HF) (Clostridium sticklandii) protein is 2,4-diaminopentanoate dehydrogenase.